The chain runs to 88 residues: Small ribosomal subunit protein uS17 (88 aa).

This sequence belongs to the universal ribosomal protein uS17 family. In terms of assembly, part of the 30S ribosomal subunit.

One of the primary rRNA binding proteins, it binds specifically to the 5'-end of 16S ribosomal RNA. The polypeptide is Small ribosomal subunit protein uS17 (Synechococcus sp. (strain CC9311)).